The following is a 1070-amino-acid chain: DNA-directed RNA polymerase subunit beta (1070 aa).

The protein belongs to the RNA polymerase beta chain family. As to quaternary structure, in plastids the minimal PEP RNA polymerase catalytic core is composed of four subunits: alpha, beta, beta', and beta''. When a (nuclear-encoded) sigma factor is associated with the core the holoenzyme is formed, which can initiate transcription.

Its subcellular location is the plastid. The protein localises to the chloroplast. The enzyme catalyses RNA(n) + a ribonucleoside 5'-triphosphate = RNA(n+1) + diphosphate. DNA-dependent RNA polymerase catalyzes the transcription of DNA into RNA using the four ribonucleoside triphosphates as substrates. The polypeptide is DNA-directed RNA polymerase subunit beta (Spinacia oleracea (Spinach)).